We begin with the raw amino-acid sequence, 596 residues long: Elongation factor 4 (596 aa).

In terms of domain architecture, tr-type G spans 2-184; sequence KHIRNFSIIA…VIVAQIPSPE (183 aa). Residues 14 to 19 and 131 to 134 contribute to the GTP site; these read DHGKST and NKID.

The protein belongs to the TRAFAC class translation factor GTPase superfamily. Classic translation factor GTPase family. LepA subfamily.

It localises to the cell inner membrane. It carries out the reaction GTP + H2O = GDP + phosphate + H(+). Its function is as follows. Required for accurate and efficient protein synthesis under certain stress conditions. May act as a fidelity factor of the translation reaction, by catalyzing a one-codon backward translocation of tRNAs on improperly translocated ribosomes. Back-translocation proceeds from a post-translocation (POST) complex to a pre-translocation (PRE) complex, thus giving elongation factor G a second chance to translocate the tRNAs correctly. Binds to ribosomes in a GTP-dependent manner. In Shewanella sediminis (strain HAW-EB3), this protein is Elongation factor 4.